The following is a 161-amino-acid chain: Protein YzcX (161 aa).

The chain is Protein YzcX (yzcX) from Escherichia coli (strain K12).